We begin with the raw amino-acid sequence, 231 residues long: 7-cyano-7-deazaguanine synthase (231 aa).

8–18 is an ATP binding site; it reads FSGGQDSTTCL. Residues Cys187, Cys196, Cys199, and Cys202 each coordinate Zn(2+).

Belongs to the QueC family. The cofactor is Zn(2+).

The catalysed reaction is 7-carboxy-7-deazaguanine + NH4(+) + ATP = 7-cyano-7-deazaguanine + ADP + phosphate + H2O + H(+). It functions in the pathway purine metabolism; 7-cyano-7-deazaguanine biosynthesis. Catalyzes the ATP-dependent conversion of 7-carboxy-7-deazaguanine (CDG) to 7-cyano-7-deazaguanine (preQ(0)). The polypeptide is 7-cyano-7-deazaguanine synthase (Vibrio vulnificus (strain CMCP6)).